The chain runs to 106 residues: Large ribosomal subunit protein eL42 (106 aa).

Belongs to the eukaryotic ribosomal protein eL42 family.

This chain is Large ribosomal subunit protein eL42 (RPL44), found in Wickerhamomyces ciferrii (strain ATCC 14091 / BCRC 22168 / CBS 111 / JCM 3599 / NBRC 0793 / NRRL Y-1031 F-60-10) (Yeast).